Here is a 230-residue protein sequence, read N- to C-terminus: Orotidine 5'-phosphate decarboxylase (230 aa).

Substrate-binding positions include D10, K31, 58–67, T117, R179, Q188, G208, and R209; that span reads DLKLHDIPNT. K60 functions as the Proton donor in the catalytic mechanism.

The protein belongs to the OMP decarboxylase family. Type 1 subfamily. In terms of assembly, homodimer.

It carries out the reaction orotidine 5'-phosphate + H(+) = UMP + CO2. It functions in the pathway pyrimidine metabolism; UMP biosynthesis via de novo pathway; UMP from orotate: step 2/2. In terms of biological role, catalyzes the decarboxylation of orotidine 5'-monophosphate (OMP) to uridine 5'-monophosphate (UMP). The sequence is that of Orotidine 5'-phosphate decarboxylase from Staphylococcus aureus (strain USA300).